Here is a 229-residue protein sequence, read N- to C-terminus: Lipoprotein-releasing system ATP-binding protein LolD (229 aa).

The ABC transporter domain maps to 6–229 (LELDAIERTY…DGHLTPYVPA (224 aa)). Residue 42–49 (GPSGSGKS) coordinates ATP.

It belongs to the ABC transporter superfamily. Lipoprotein translocase (TC 3.A.1.125) family. As to quaternary structure, the complex is composed of two ATP-binding proteins (LolD) and two transmembrane proteins (LolC and LolE).

Its subcellular location is the cell inner membrane. Part of the ABC transporter complex LolCDE involved in the translocation of mature outer membrane-directed lipoproteins, from the inner membrane to the periplasmic chaperone, LolA. Responsible for the formation of the LolA-lipoprotein complex in an ATP-dependent manner. This is Lipoprotein-releasing system ATP-binding protein LolD from Maricaulis maris (strain MCS10) (Caulobacter maris).